Here is a 199-residue protein sequence, read N- to C-terminus: NADH-quinone oxidoreductase subunit I (199 aa).

4Fe-4S ferredoxin-type domains lie at 45-75 (LNRH…VEGA) and 91-120 (RVYQ…MSNE). [4Fe-4S] cluster contacts are provided by Cys-55, Cys-58, Cys-61, Cys-65, Cys-100, Cys-103, Cys-106, and Cys-110. The interval 164–199 (GTPAAHMLSGEDDAASETTLDRSDDHSATYEEAERP) is disordered. Basic and acidic residues predominate over residues 182–199 (TLDRSDDHSATYEEAERP).

It belongs to the complex I 23 kDa subunit family. In terms of assembly, NDH-1 is composed of 14 different subunits. Subunits NuoA, H, J, K, L, M, N constitute the membrane sector of the complex. [4Fe-4S] cluster is required as a cofactor.

It localises to the cell membrane. It carries out the reaction a quinone + NADH + 5 H(+)(in) = a quinol + NAD(+) + 4 H(+)(out). Its function is as follows. NDH-1 shuttles electrons from NADH, via FMN and iron-sulfur (Fe-S) centers, to quinones in the respiratory chain. The immediate electron acceptor for the enzyme in this species is believed to be ubiquinone. Couples the redox reaction to proton translocation (for every two electrons transferred, four hydrogen ions are translocated across the cytoplasmic membrane), and thus conserves the redox energy in a proton gradient. This chain is NADH-quinone oxidoreductase subunit I, found in Acidothermus cellulolyticus (strain ATCC 43068 / DSM 8971 / 11B).